Consider the following 652-residue polypeptide: MNKYRRGLALGALALAVFILIGVGISMRATPQPVNLTQVLTDIRDGRVTEIHLANDGQAAEVTYTDESKTRVALPAGESLTTLLTDAGIPVERWPDIYPAGNGAISADLMLLLRILTIVAVGVVIFVLFRRFGPSSIGTTPTRRGSFEPIRPGERVITFDDVAGAEEVKEEVADIVDYLRDPERFRRLGARIPRGVLLTGPPGTGKTLLTRALAGEARASFFSVSGSEFVELYVGVGASRVRELFRKAKENAPAIIFIDEIDAIGRRRGRMEQSSEYDQTLNQILVEMDGFEERTTVVVVAATNRVDILDPALLRPGRFDRKVVVDLPDRKARRAILEVHARGKPLAENVNLDELAARTTGMTGADLANVINEAAILAARDRRETITNQDLLEALDRTLAGPARNARRFSERERRVVAYHEAGHAVVAHLLPHADPVRKVSIVSRGRAGGYTMIVPDEDRGLWTRAQLSDRLAALLGGLAAEELIFGDITTGSSNDLEQTTAIATSMVQRYGMGKRFGLLSTGAGSDLQQLSPQSAYTAEQEALELVQQAHQVALDVLRAHADDLERVAQRLLEVETIDGEELETLISPPRQLPVRRPVEQALPTPLHRAPIREGRRKGSAHRVGRAIGLVASFTRDAVESLRAAKPQIDRT.

The Cytoplasmic segment spans residues 1–6 (MNKYRR). A helical membrane pass occupies residues 7–27 (GLALGALALAVFILIGVGISM). The Extracellular segment spans residues 28 to 108 (RATPQPVNLT…PAGNGAISAD (81 aa)). Residues 109-129 (LMLLLRILTIVAVGVVIFVLF) traverse the membrane as a helical segment. At 130–652 (RRFGPSSIGT…RAAKPQIDRT (523 aa)) the chain is on the cytoplasmic side. Position 200–207 (200–207 (GPPGTGKT)) interacts with ATP. A Zn(2+)-binding site is contributed by His420. Residue Glu421 is part of the active site. Positions 424 and 496 each coordinate Zn(2+).

This sequence in the central section; belongs to the AAA ATPase family. The protein in the C-terminal section; belongs to the peptidase M41 family. In terms of assembly, homohexamer. Zn(2+) is required as a cofactor.

The protein localises to the cell membrane. Acts as a processive, ATP-dependent zinc metallopeptidase for both cytoplasmic and membrane proteins. Plays a role in the quality control of integral membrane proteins. This Sphaerobacter thermophilus (strain ATCC 49802 / DSM 20745 / KCCM 41009 / NCIMB 13125 / S 6022) protein is ATP-dependent zinc metalloprotease FtsH 2.